Here is a 249-residue protein sequence, read N- to C-terminus: tRNA (guanine-N(1)-)-methyltransferase (249 aa).

Residues Gly-121 and 141 to 146 (LGDFVL) each bind S-adenosyl-L-methionine.

It belongs to the RNA methyltransferase TrmD family. As to quaternary structure, homodimer.

The protein resides in the cytoplasm. It carries out the reaction guanosine(37) in tRNA + S-adenosyl-L-methionine = N(1)-methylguanosine(37) in tRNA + S-adenosyl-L-homocysteine + H(+). Functionally, specifically methylates guanosine-37 in various tRNAs. The protein is tRNA (guanine-N(1)-)-methyltransferase of Cereibacter sphaeroides (strain ATCC 17023 / DSM 158 / JCM 6121 / CCUG 31486 / LMG 2827 / NBRC 12203 / NCIMB 8253 / ATH 2.4.1.) (Rhodobacter sphaeroides).